Here is a 362-residue protein sequence, read N- to C-terminus: Neisseria adhesin A (362 aa).

A signal peptide spans 1–23; it reads MKHFPSKVLTTAILATFCSGALA. The head domain stretch occupies residues 24-169; that stretch reads ATSDDDVKKA…NIVKIDEKLE (146 aa). 2 coiled-coil regions span residues 90 to 146 and 183 to 288; these read VTNL…LNKL and NDIA…KETR. The tract at residues 170 to 307 is coiled stalk domain; sequence AVADTVDKHA…SGLFQPYNVG (138 aa). Beta stranded transmembrane passes span 307-317, 321-332, 339-345, and 351-362; these read GRFNVTAAVGG, ESAVAIGTGFRF, KAGVAVG, and SAAYHVGVNYEW. The tract at residues 308 to 362 is translocator domain; it reads RFNVTAAVGGYKSESAVAIGTGFRFTENFAAKAGVAVGTSSGSSAAYHVGVNYEW.

It belongs to the autotransporter-2 (AT-2) (TC 1.B.40) family. Forms high molecular weight oligomers in whole cell extracts that are not disrupted by boiling in SDS buffer. Homotrimer. A fragment containing the N-terminal half of the mature protein (residues 24-210, head domain plus part of the stalk) binds human integrin beta-1 (ITGB1). It was not seen to bind immobilized purified CEACAMs 1, 3, 5, 6 or 8 nor commercially prepared type I collagen, fibronectin or matrigel.

Its subcellular location is the cell surface. It is found in the cell outer membrane. In terms of biological role, adheres to and induces bacterial uptake by human epithelial cells. Upon expression in engineered Y.enterocolitica confers an 11- to 15-fold increase in bacterial adherence and uptake by human epithelial cell lines; part of the uptake is mediated by integrin beta-1 (ITGB1) suggesting it may be a human receptor for NadA. A bacterial cell surface protein; antisera against this protein induce complement-mediated killing of this and other strains. In Neisseria meningitidis serogroup B (strain ATCC BAA-335 / MC58), this protein is Neisseria adhesin A.